The following is a 352-amino-acid chain: Cell division protein ZipA (352 aa).

Over 1 to 5 (MQELR) the chain is Periplasmic. A helical transmembrane segment spans residues 6–26 (LVLIIVGALAISALLLHGLWT). The Cytoplasmic segment spans residues 27 to 352 (SRKEKPAKFG…REKAKLYSQA (326 aa)). Residues 35–54 (FGEKPLGKLDDSNRDTEGFD) are compositionally biased toward basic and acidic residues. Residues 35–56 (FGEKPLGKLDDSNRDTEGFDHT) are disordered.

Belongs to the ZipA family. Interacts with FtsZ via their C-terminal domains.

It localises to the cell inner membrane. Essential cell division protein that stabilizes the FtsZ protofilaments by cross-linking them and that serves as a cytoplasmic membrane anchor for the Z ring. Also required for the recruitment to the septal ring of downstream cell division proteins. The sequence is that of Cell division protein ZipA from Photobacterium profundum (strain SS9).